A 141-amino-acid chain; its full sequence is uncharacterized protein (141 aa).

Positions 4 to 139 (RTQMMYDMET…LIELFSKLDK (136 aa)) constitute an HTH marR-type domain. The H-T-H motif DNA-binding region spans 53–76 (VTEFAPILEVSASHITAVTDALVE).

This is an uncharacterized protein from Bacillus subtilis (strain 168).